We begin with the raw amino-acid sequence, 2038 residues long: MELAHSLLLNEEASNQLGAVQKAEFIFEWLRYLEKLLLATNREDVREKQKTLVGQLLSLLNSSPGPPTRKLLAQDLAILYSVGDTVSVYETIDKCNDLIRSKDDSPSYLPTKLAAVVCLGSLYKKLGRILANGFTDTVVNILKAMKSAESQGRYEIMLSLQSILTGLGAAAAPCHRDVYKAARSCLTDRSMAVRCAAAKCLLELQNEAIFMWSTDVDSVATLCFKSFEGSNYDVRISVSKLLGTVLAKAVTAKHPGAGSKQSARRVSLEEVLELLGAGFLRGSSGFLRASGDMLKGNSSVSRDVRVGVTQAYVVFVSTLGGAWLEKNLAAFLSHILSLVSQSNPKATQTQIDAVCCRRCVSFILRATLGGLLGEKAQIAAAKEICQAVWRLKKVMDAALSDGNVETRLSSTDVAASQHVLVCALQELGNLIHNLGTTAAPLLQDSSTGLLDSVISVVLHPSISVRLAAAWCLHCIAVALPSYLTPLLDRCLERLAILKSSPEAVTGFSSAVAALLGSVTHCPLGIPHGKGKIIMTIAEDLLCSAAQNSRLSLQRTQAGWLLVAALMTLGPAVVSHHLTRVLLLWKCVFPASPRDLETEKSRGDSFTWQVTLEGRAGALCAVKSFISHCGDLLTEEVIQRLLPPLPCAVDLLTQLSSILKTYGSSLKTPSIVYRQRLYELLILLPPETYKGNLCVILKELAAELTAPDTQAAASTCLLPALCHPDDLLILSPLLQETDHRFIEEQLLLGNGVACGSLEYDPYSIYEKDVEGDSVPKPLPPALSVISSASKLFGVVCATVDEAQRVLILEQLLNSIKHTKGARQQTVQLHVVSAISNLLKYVAGSKQSLGPEVRRLVLTLVLGALESPTPLLRCAASEAWARLAQVADDGAFTAGLAQLSFDKLKSARDVVTRTGHSLALGSLHRYLGGIGPQHLSSCIGVLYTLSQDSTSPDVQTWALHSLSLTIDSAGALYHVHVESTLSLIVMLLLNVPPTHAQVHQSLGRCLNALITTLGPELQGSNTSVSALRTSCLLGCAVMQDHPGCLVQAQAISCLQQLHMFAPRHVNLSSLVSCLCVNLCSPYLLLRRAVLACLRQLVQREAAEVSEHAIMLARDGRDAAADANLREVGLEGALLALLDRETDESLCQDIRETLHHMLTSMAVGKLTLWLKLCKDVLAASADFTAVTCVDTMQEEEGDRGDDASVLTRGDDKPHPFSNPRWATRVFAADCVCRIINQCENANRAHFDIALAQEMKKRDSRNDFLVLHLADLIRMAFMAATDHSDQLRLSGLDTLLVVIRRFADIAEPEFPGHVILEQYQANVGAALRPAFTSETPPDITAKACQVCSAWIASGVVSDLSDLRRVHQLLVSSLTKIQAGKEALSQLYNESASTMEILAVLRAWAEVYIIAVQRHKNHKQALKTTVNSEDSMRNGSSSAAGLLDLVCTDLATLSKLWLAALQDFALLTLPAEFASQLPTEGGAFYTAETSKSAKLHYHDSWALILHAAALWLTSTGFADPDEGGANLSRPVTPTSMCQGSSSSGAAVKSPEDVYTDRFHLILGISVEFLCSLRSDASLESIMACLRALQALLDVPWPRWRIGSDQDLGIELLNVLHRVILTRESPAIQLASLEVVRQIICAAQEHVKEKRRSAEVDDGASEKETLPEFGEGKDTGGLVPGKSLVFATLELCVCILVRQLPELNPKLAGSPGGKASKPKTLLEEGSRLVAAALAILAELPAVCSPEGSISILPTVLYLTIGVLRETAVKLPGGQLSCTVTASLQTLKGILTSPMARAEKSHEAWTSLLQSALATVLDCWSPVDGAQEPDEVSLLTAVTVFILSTSPEVTTVPCLQNRCIEKFKAALESKDSVVQMKTCQLLHSIFQYPKPAVSYPYIYSLASSIVEKLQDIARRKPEDATELQLCQEGIKLLEALVAIAEEEHRAQLVACLLPILISFLLDENALGSATSVTRSLHDFALHSLMQIGPRYSSVFKRVMASSPALKARLEAAVKGNQESVRVDPPSKHAKNLARNSSIQLKTNFL.

HEAT repeat units follow at residues 850-887 (EVRR…VADD) and 1082-1119 (LLRR…AAAD). The disordered stretch occupies residues 1646-1668 (RSAEVDDGASEKETLPEFGEGKD). At Ser1647 the chain carries Phosphoserine.

It belongs to the HEATR5 family.

The chain is HEAT repeat-containing protein 5A (Heatr5a) from Mus musculus (Mouse).